The following is a 427-amino-acid chain: Enolase (427 aa).

Gln163 is a binding site for (2R)-2-phosphoglycerate. Catalysis depends on Glu205, which acts as the Proton donor. Mg(2+) contacts are provided by Asp242, Glu285, and Asp312. Lys337, Arg366, Ser367, and Lys388 together coordinate (2R)-2-phosphoglycerate. The Proton acceptor role is filled by Lys337.

It belongs to the enolase family. Mg(2+) is required as a cofactor.

Its subcellular location is the cytoplasm. It is found in the secreted. It localises to the cell surface. It catalyses the reaction (2R)-2-phosphoglycerate = phosphoenolpyruvate + H2O. Its pathway is carbohydrate degradation; glycolysis; pyruvate from D-glyceraldehyde 3-phosphate: step 4/5. Functionally, catalyzes the reversible conversion of 2-phosphoglycerate (2-PG) into phosphoenolpyruvate (PEP). It is essential for the degradation of carbohydrates via glycolysis. This is Enolase from Rhodopseudomonas palustris (strain ATCC BAA-98 / CGA009).